A 1032-amino-acid chain; its full sequence is Leucine-rich repeat and coiled-coil domain-containing protein 1 (1032 aa).

5 LRR repeats span residues 44–65 (TLHA…DHIW), 66–87 (NLQH…NTLT), 88–109 (KLCT…EELI), 110–131 (NLTR…IPLH), and 136–157 (KLRY…LQCM). The LRRCT domain occupies 175 to 218 (NPVCRLPGYRAVILQTLPQLRILDCKNIFGEPVNLTEINSSQLQ). The disordered stretch occupies residues 316-345 (DNVLEKDPRPKRDTDITSESDYGNRKECNR). Basic and acidic residues predominate over residues 318–330 (VLEKDPRPKRDTD). Positions 421-647 (NTYQSLVEQL…DLENEFRIAL (227 aa)) form a coiled coil.

The protein belongs to the LRRCC1 family.

It localises to the cytoplasm. The protein localises to the cytoskeleton. Its subcellular location is the microtubule organizing center. The protein resides in the centrosome. It is found in the centriole. Functionally, required for the organization of the mitotic spindle. Maintains the structural integrity of centrosomes during mitosis. This is Leucine-rich repeat and coiled-coil domain-containing protein 1 (LRRCC1) from Homo sapiens (Human).